Here is a 120-residue protein sequence, read N- to C-terminus: Aspartate 1-decarboxylase (120 aa).

Serine 25 acts as the Schiff-base intermediate with substrate; via pyruvic acid in catalysis. Position 25 is a pyruvic acid (Ser) (serine 25). A substrate-binding site is contributed by threonine 57. The active-site Proton donor is the tyrosine 58. Position 73 to 75 (73 to 75 (GAA)) interacts with substrate.

It belongs to the PanD family. Heterooctamer of four alpha and four beta subunits. Pyruvate serves as cofactor. Is synthesized initially as an inactive proenzyme, which is activated by self-cleavage at a specific serine bond to produce a beta-subunit with a hydroxyl group at its C-terminus and an alpha-subunit with a pyruvoyl group at its N-terminus.

Its subcellular location is the cytoplasm. It carries out the reaction L-aspartate + H(+) = beta-alanine + CO2. The protein operates within cofactor biosynthesis; (R)-pantothenate biosynthesis; beta-alanine from L-aspartate: step 1/1. Functionally, catalyzes the pyruvoyl-dependent decarboxylation of aspartate to produce beta-alanine. The polypeptide is Aspartate 1-decarboxylase (Deinococcus geothermalis (strain DSM 11300 / CIP 105573 / AG-3a)).